A 317-amino-acid polypeptide reads, in one-letter code: Apolipoprotein E (317 aa).

Residues 1-18 (MRVLWVALVVTLLAGCRT) form the signal peptide. Repeat copies occupy residues 79-100 (ELIEESMKEVKAYREELEAQLG), 101-122 (PVTQETQARLSKELQAAQARVG), 123-144 (ADMEDVRNRLVLYRSEVHNMLG), 145-166 (QTTEELRSRLASHLRNVRKRLV), 167-188 (RDTEDLQKRLAVYQAGLREGAE), 189-210 (RSVSALRERLGPLVEQGRLRAA), 211-232 (TLSTRAGQPLRERAEAWGQKLR), and 233-254 (GRLEEMGSRTRDRLDEMRDELE). An 8 X 22 AA approximate tandem repeats region spans residues 79 to 254 (ELIEESMKEV…RLDEMRDELE (176 aa)). Met142 bears the Methionine sulfoxide mark. Residues 157 to 167 (HLRNVRKRLVR) are LDL and other lipoprotein receptors binding. 161–164 (VRKR) is a heparin binding site. Positions 209 to 289 (AATLSTRAGQ…GWFEPLVEDM (81 aa)) are lipid-binding and lipoprotein association. 228 to 235 (GQKLRGRL) contributes to the heparin binding site. The homooligomerization stretch occupies residues 265–317 (SQLRLQAEAFQARLKGWFEPLVEDMRRQWAGLVERMQSAVSISSSTSAPSDNQ). A specificity for association with VLDL region spans residues 277–289 (RLKGWFEPLVEDM).

It belongs to the apolipoprotein A1/A4/E family. In terms of assembly, homotetramer. May interact with ABCA1; functionally associated with ABCA1 in the biogenesis of HDLs. May interact with APP/A4 amyloid-beta peptide; the interaction is extremely stable in vitro but its physiological significance is unclear. May interact with MAPT. May interact with MAP2. In the cerebrospinal fluid, interacts with secreted SORL1. Interacts with PMEL; this allows the loading of PMEL luminal fragment on ILVs to induce fibril nucleation. In terms of processing, APOE exists as multiple glycosylated and sialylated glycoforms within cells and in plasma. The extent of glycosylation and sialylation are tissue and context specific. Post-translationally, glycated in plasma VLDL. Phosphorylated by FAM20C in the extracellular medium.

Its subcellular location is the secreted. It localises to the extracellular space. It is found in the extracellular matrix. The protein resides in the extracellular vesicle. The protein localises to the endosome. Its subcellular location is the multivesicular body. In terms of biological role, APOE is an apolipoprotein, a protein associating with lipid particles, that mainly functions in lipoprotein-mediated lipid transport between organs via the plasma and interstitial fluids. APOE is a core component of plasma lipoproteins and is involved in their production, conversion and clearance. Apolipoproteins are amphipathic molecules that interact both with lipids of the lipoprotein particle core and the aqueous environment of the plasma. As such, APOE associates with chylomicrons, chylomicron remnants, very low density lipoproteins (VLDL) and intermediate density lipoproteins (IDL) but shows a preferential binding to high-density lipoproteins (HDL). It also binds a wide range of cellular receptors including the LDL receptor/LDLR and the very low-density lipoprotein receptor/VLDLR that mediate the cellular uptake of the APOE-containing lipoprotein particles. Finally, APOE also has a heparin-binding activity and binds heparan-sulfate proteoglycans on the surface of cells, a property that supports the capture and the receptor-mediated uptake of APOE-containing lipoproteins by cells. This chain is Apolipoprotein E (APOE), found in Sus scrofa (Pig).